A 356-amino-acid polypeptide reads, in one-letter code: Protein-glutamate methylesterase/protein-glutamine glutaminase 3 (356 aa).

Residues 3–120 (KVAIVDDSAV…KGFLEESQAR (118 aa)) enclose the Response regulatory domain. Asp54 bears the 4-aspartylphosphate mark. The region spanning 165–356 (NQTTDRVVAL…AEEIIAFTKQ (192 aa)) is the CheB-type methylesterase domain. Catalysis depends on residues Ser177, His203, and Asp299.

It belongs to the CheB family. Post-translationally, phosphorylated by CheA. Phosphorylation of the N-terminal regulatory domain activates the methylesterase activity.

The protein localises to the cytoplasm. It carries out the reaction [protein]-L-glutamate 5-O-methyl ester + H2O = L-glutamyl-[protein] + methanol + H(+). It catalyses the reaction L-glutaminyl-[protein] + H2O = L-glutamyl-[protein] + NH4(+). Functionally, involved in chemotaxis. Part of a chemotaxis signal transduction system that modulates chemotaxis in response to various stimuli. Catalyzes the demethylation of specific methylglutamate residues introduced into the chemoreceptors (methyl-accepting chemotaxis proteins or MCP) by CheR. Also mediates the irreversible deamidation of specific glutamine residues to glutamic acid. In Shewanella oneidensis (strain ATCC 700550 / JCM 31522 / CIP 106686 / LMG 19005 / NCIMB 14063 / MR-1), this protein is Protein-glutamate methylesterase/protein-glutamine glutaminase 3.